Consider the following 163-residue polypeptide: MADSSFDIVSKIDRQEVDNALGQTAREIATRFDFKGTGASIEWQGEHAIEISASADDRASAVLDVFKTKLVKRDVSLKVLDASEPRQSGQQSKIAIALKEGISSEDAKKISKLIRDEGPKGVKAQIQGDELRVSSKKRDDLQAVIALVKQQDYDFAVQFTNYR.

Belongs to the YajQ family.

In terms of biological role, nucleotide-binding protein. This chain is Nucleotide-binding protein Noca_0564, found in Nocardioides sp. (strain ATCC BAA-499 / JS614).